An 887-amino-acid polypeptide reads, in one-letter code: MTDQADTSERKPKAAGKTLSLKRTVESGHVRQNFSHGRSKSVVVEKKKKRTLKTSADAAPAAAPAAAPAAAEEVAKKPVAAPEVKPAAPVEERPAPVAKAAPEVKAVPAPAPAAAPAVEKKPSRSRSGVVLRTLTEEEKNARAQALDSAREREGEDRRRAEEEARRFAEEDARREAERAAAAARAAEEASRHTADQSTRTRAAEEAKRRLDDDRPAATPAAARPAKEQAIEEDDDKPKRGAGHTPAKAPPARRSEERRRGKLTITKAFDDESERQRSLASMRRRVERERKKHMGIQEAPQKIIREVVIPEVITIQELANRMAERAVDVMKILMKQGIMLKITDVIDSDTAQLVAEELGHTVKRVAESDVEEGLVGEADIEEAKQARAPVVTVMGHVDHGKTSLLDALRKTDVAAGEAGGITQHIGAYQVNLSSGERITFLDTPGHAAFTSMRARGAKVTDIVVLVVAADDGVMPQTIEAINHAKAAGVPMIVAINKMDKPEADPTRVKNELLQHEVVVEDFGGDVLTVPISAKTGMGLDKLEETILLQAELLDIRANPDRAAEGIIVEAKLDRGRGPVGTVLVQRGTLKVGDIIVAGAEWGRVRALINDRGENVESAGPSVPVEVLGLGGAPEAGDVISVVESEGRAREVTAYRQRLQRDKRVGTGGRTSLDQMLSQLKEQDKKELPIVVKADVQGSAEAIVQALEKLGTDEVTARVLHVGVGGVTESDVTLATASRAPIIGFNVRANTQARDAARQAGVEIRYYSVIYDLVDDIKAAMSGMLSPELRETFLGNAEILEIFNISKTGKVAGCRVTEGVVRRGSHVRLIRDDVVIHEGKLSTLKRFKDEVKEVQSGQECGMAFEGYQDMRKGDVIECFDVEVVQRSLA.

The disordered stretch occupies residues 1 to 291; that stretch reads MTDQADTSER…RRRVERERKK (291 aa). Low complexity predominate over residues 58-117; that stretch reads AAPAAAPAAAPAAAEEVAKKPVAAPEVKPAAPVEERPAPVAKAAPEVKAVPAPAPAAAPA. Basic and acidic residues-rich tracts occupy residues 148 to 178, 185 to 194, 201 to 215, and 267 to 276; these read SARE…EAER, AAEEASRHTA, RAAE…DDRP, and AFDDESERQR. One can recognise a tr-type G domain in the interval 385 to 553; sequence ARAPVVTVMG…TILLQAELLD (169 aa). Positions 394–401 are G1; it reads GHVDHGKT. 394-401 is a binding site for GTP; sequence GHVDHGKT. The segment at 419 to 423 is G2; that stretch reads GITQH. Residues 441 to 444 form a G3 region; it reads DTPG. Residues 441-445 and 495-498 each bind GTP; these read DTPGH and NKMD. The interval 495 to 498 is G4; it reads NKMD. Residues 531-533 form a G5 region; sequence SAK.

Belongs to the TRAFAC class translation factor GTPase superfamily. Classic translation factor GTPase family. IF-2 subfamily.

The protein localises to the cytoplasm. Its function is as follows. One of the essential components for the initiation of protein synthesis. Protects formylmethionyl-tRNA from spontaneous hydrolysis and promotes its binding to the 30S ribosomal subunits. Also involved in the hydrolysis of GTP during the formation of the 70S ribosomal complex. In Parvibaculum lavamentivorans (strain DS-1 / DSM 13023 / NCIMB 13966), this protein is Translation initiation factor IF-2.